The chain runs to 141 residues: HTH-type transcriptional repressor NsrR (141 aa).

An HTH rrf2-type domain is found at 2–129 (QLTSFTDYGL…DNYTLADLVE (128 aa)). The H-T-H motif DNA-binding region spans 28–51 (ISEVTDVYGVSRNHMVKIINQLSR). Residues C91, C96, and C102 each coordinate [2Fe-2S] cluster.

[2Fe-2S] cluster is required as a cofactor.

Its function is as follows. Nitric oxide-sensitive repressor of genes involved in protecting the cell against nitrosative stress. May require iron for activity. In Escherichia coli O157:H7 (strain EC4115 / EHEC), this protein is HTH-type transcriptional repressor NsrR.